We begin with the raw amino-acid sequence, 95 residues long: Aspartyl/glutamyl-tRNA(Asn/Gln) amidotransferase subunit C (95 aa).

This sequence belongs to the GatC family. Heterotrimer of A, B and C subunits.

The catalysed reaction is L-glutamyl-tRNA(Gln) + L-glutamine + ATP + H2O = L-glutaminyl-tRNA(Gln) + L-glutamate + ADP + phosphate + H(+). The enzyme catalyses L-aspartyl-tRNA(Asn) + L-glutamine + ATP + H2O = L-asparaginyl-tRNA(Asn) + L-glutamate + ADP + phosphate + 2 H(+). Functionally, allows the formation of correctly charged Asn-tRNA(Asn) or Gln-tRNA(Gln) through the transamidation of misacylated Asp-tRNA(Asn) or Glu-tRNA(Gln) in organisms which lack either or both of asparaginyl-tRNA or glutaminyl-tRNA synthetases. The reaction takes place in the presence of glutamine and ATP through an activated phospho-Asp-tRNA(Asn) or phospho-Glu-tRNA(Gln). The protein is Aspartyl/glutamyl-tRNA(Asn/Gln) amidotransferase subunit C of Chlorobium chlorochromatii (strain CaD3).